The sequence spans 744 residues: NAD(P)H-quinone oxidoreductase subunit 5, chloroplastic (744 aa).

Helical transmembrane passes span 9–29 (WIIPFIPLPVPILIGVGLLFF), 40–60 (WVFPSIFLLTIVMIFSIDLSI), 89–109 (IDSLTSIMSILITTVGILVLI), 125–145 (FTYLSFFNTSMLGLVTSSNLI), 147–167 (VYIFWELVGMCSYLLIGFWFT), 185–205 (GDFGLLLGILGFYWITGSLEF), 219–239 (NEVNIFFVTLCALLLFCGSVA), 258–278 (TPISALIHAATMVAAGIFLVA), 280–300 (LLPLFIVIPSIMSGIALIGII), 327–347 (LGYMILALGMGSYRAALFHLI), 354–374 (ALLFLGSGSIIHSMEAIVGYS), 396–416 (NAFLIGTLSLCGIPPFACFWS), 425–445 (WLYSPIFAIIACSTAGLTAFY), 552–572 (LFSMLVLVLFTFFVGSVGISF), 612–632 (FSVSIAFFGILIASFFYKPVF), and 724–744 (ISSYIFFFLLIFLVICYSIFI).

This sequence belongs to the complex I subunit 5 family. NDH is composed of at least 16 different subunits, 5 of which are encoded in the nucleus.

The protein localises to the plastid. It is found in the chloroplast thylakoid membrane. It carries out the reaction a plastoquinone + NADH + (n+1) H(+)(in) = a plastoquinol + NAD(+) + n H(+)(out). It catalyses the reaction a plastoquinone + NADPH + (n+1) H(+)(in) = a plastoquinol + NADP(+) + n H(+)(out). Functionally, NDH shuttles electrons from NAD(P)H:plastoquinone, via FMN and iron-sulfur (Fe-S) centers, to quinones in the photosynthetic chain and possibly in a chloroplast respiratory chain. The immediate electron acceptor for the enzyme in this species is believed to be plastoquinone. Couples the redox reaction to proton translocation, and thus conserves the redox energy in a proton gradient. The protein is NAD(P)H-quinone oxidoreductase subunit 5, chloroplastic (ndhF) of Cicer arietinum (Chickpea).